Here is a 221-residue protein sequence, read N- to C-terminus: MTDVADVNVGIIRFPGTNCDRDIEYAVNLVGANSHYIYWNETDLSQMDVVIIPGGFSYGDYLRAGSIAGITPIIDAIKDFAKKENPVLGICNGAQILGEIDLVPGVFIENENAKFICKSKKLKVNTTRTPFTKLYKKNEVIDLPIAHKEGRYYTDNLETLYDNNQIVLTFEDGNPNGSLDNITGVCNVDGNVVAVMPHPERAVEKLLRSEDGLKFFKSFLD.

The 214-residue stretch at 8–221 (NVGIIRFPGT…GLKFFKSFLD (214 aa)) folds into the Glutamine amidotransferase type-1 domain. Catalysis depends on Cys91, which acts as the Nucleophile. Active-site residues include His198 and Glu200.

Part of the FGAM synthase complex composed of 1 PurL, 1 PurQ and 2 PurS subunits.

It localises to the cytoplasm. The enzyme catalyses N(2)-formyl-N(1)-(5-phospho-beta-D-ribosyl)glycinamide + L-glutamine + ATP + H2O = 2-formamido-N(1)-(5-O-phospho-beta-D-ribosyl)acetamidine + L-glutamate + ADP + phosphate + H(+). It carries out the reaction L-glutamine + H2O = L-glutamate + NH4(+). Its pathway is purine metabolism; IMP biosynthesis via de novo pathway; 5-amino-1-(5-phospho-D-ribosyl)imidazole from N(2)-formyl-N(1)-(5-phospho-D-ribosyl)glycinamide: step 1/2. Part of the phosphoribosylformylglycinamidine synthase complex involved in the purines biosynthetic pathway. Catalyzes the ATP-dependent conversion of formylglycinamide ribonucleotide (FGAR) and glutamine to yield formylglycinamidine ribonucleotide (FGAM) and glutamate. The FGAM synthase complex is composed of three subunits. PurQ produces an ammonia molecule by converting glutamine to glutamate. PurL transfers the ammonia molecule to FGAR to form FGAM in an ATP-dependent manner. PurS interacts with PurQ and PurL and is thought to assist in the transfer of the ammonia molecule from PurQ to PurL. This is Phosphoribosylformylglycinamidine synthase subunit PurQ from Methanosphaera stadtmanae (strain ATCC 43021 / DSM 3091 / JCM 11832 / MCB-3).